The chain runs to 163 residues: Phosphopantetheine adenylyltransferase (163 aa).

Thr11 contributes to the substrate binding site. Residues 11-12 and His19 each bind ATP; that span reads TF. Residues Lys43, Leu75, and Arg89 each contribute to the substrate site. ATP contacts are provided by residues 90-92, Glu100, and 125-131; these read GLR and YMFISAT.

It belongs to the bacterial CoaD family. In terms of assembly, homohexamer. Mg(2+) serves as cofactor.

The protein localises to the cytoplasm. It carries out the reaction (R)-4'-phosphopantetheine + ATP + H(+) = 3'-dephospho-CoA + diphosphate. Its pathway is cofactor biosynthesis; coenzyme A biosynthesis; CoA from (R)-pantothenate: step 4/5. Reversibly transfers an adenylyl group from ATP to 4'-phosphopantetheine, yielding dephospho-CoA (dPCoA) and pyrophosphate. The polypeptide is Phosphopantetheine adenylyltransferase (Azoarcus sp. (strain BH72)).